A 312-amino-acid chain; its full sequence is Gamma-soluble NSF attachment protein (312 aa).

The segment at 281–312 (KKKSPATPQAKPDGAAGMAAEEEEDEYSGGLC) is disordered. S284 carries the post-translational modification Phosphoserine. Residue T287 is modified to Phosphothreonine. Acidic residues predominate over residues 300 to 312 (AEEEEDEYSGGLC). S308 carries the phosphoserine modification.

Belongs to the SNAP family. In terms of assembly, interacts with RAB11FIP5. Interacts with VTI1A. In terms of tissue distribution, abundantly expressed in the heart, liver and kidneys with lower expression in the brain, spleen, lung, muscle and testes.

It is found in the membrane. The protein localises to the golgi apparatus. Functionally, required for vesicular transport between the endoplasmic reticulum and the Golgi apparatus. The protein is Gamma-soluble NSF attachment protein of Mus musculus (Mouse).